The primary structure comprises 495 residues: Cobyric acid synthase (495 aa).

The region spanning 262–445 (CLEIAVIRLP…LHGLFDNHRW (184 aa)) is the GATase cobBQ-type domain. The active-site Nucleophile is the C340. The active site involves H437.

Belongs to the CobB/CobQ family. CobQ subfamily.

Its pathway is cofactor biosynthesis; adenosylcobalamin biosynthesis. In terms of biological role, catalyzes amidations at positions B, D, E, and G on adenosylcobyrinic A,C-diamide. NH(2) groups are provided by glutamine, and one molecule of ATP is hydrogenolyzed for each amidation. The polypeptide is Cobyric acid synthase (Synechococcus sp. (strain JA-3-3Ab) (Cyanobacteria bacterium Yellowstone A-Prime)).